The chain runs to 88 residues: Small ribosomal subunit protein bS20 (88 aa).

It belongs to the bacterial ribosomal protein bS20 family.

Its function is as follows. Binds directly to 16S ribosomal RNA. The protein is Small ribosomal subunit protein bS20 of Methylorubrum populi (strain ATCC BAA-705 / NCIMB 13946 / BJ001) (Methylobacterium populi).